The sequence spans 387 residues: MSVIKMTDLDLAGKRVLIRADLNVPVKDGKVTSDARIRASLPTIEAALKQGAKVMVTSHLGRPTEGEYNEEFSLKPVVDYLKEKLSAPVSLAKDYLNGVDVNAGELVVLENVRFNKGEKKDDETLSKQYAALCDVFVMDAFGTAHRAQASTHGVAKFADIACAGPLLSAELEALGKALDKPERPMVAIVGGSKVSTKLTVLDSLSKIADQLIVGGGIANTFIAAEGHSVGRSLYEADLVDDAKKLMEKCDIPVPTDVRVATEFSETAPAVLKSANDIKDDEQVLDIGDVTAERLAEILKNAKTILWNGPVGVFEFPNFRKGTEVIAKAIADSDAFSIAGGGDTLAAIDLFDIADKISYISTGGGAFLEFVEGKKLPAVAMLEERAKQ.

Substrate-binding positions include 21–23, Arg36, 59–62, Arg113, and Arg146; these read DLN and HLGR. ATP is bound by residues Lys197, Glu314, and 340–343; that span reads GGDT.

The protein belongs to the phosphoglycerate kinase family. Monomer.

It localises to the cytoplasm. It carries out the reaction (2R)-3-phosphoglycerate + ATP = (2R)-3-phospho-glyceroyl phosphate + ADP. It functions in the pathway carbohydrate degradation; glycolysis; pyruvate from D-glyceraldehyde 3-phosphate: step 2/5. This is Phosphoglycerate kinase from Proteus mirabilis (strain HI4320).